The sequence spans 278 residues: Protoheme IX farnesyltransferase (278 aa).

The next 9 membrane-spanning stretches (helical) occupy residues 12–32, 33–53, 83–103, 105–125, 130–150, 157–177, 204–224, 228–248, and 257–277; these read VIWL…QTVD, WSKL…SAAF, ALVY…YLLG, LPGL…TIWL, WLNI…GYAL, LPAV…IWAL, VIIS…YLAF, LLGL…SILA, and MWKM…ALVF.

The protein belongs to the UbiA prenyltransferase family. Protoheme IX farnesyltransferase subfamily.

The protein resides in the cell membrane. The enzyme catalyses heme b + (2E,6E)-farnesyl diphosphate + H2O = Fe(II)-heme o + diphosphate. It participates in porphyrin-containing compound metabolism; heme O biosynthesis; heme O from protoheme: step 1/1. In terms of biological role, converts heme B (protoheme IX) to heme O by substitution of the vinyl group on carbon 2 of heme B porphyrin ring with a hydroxyethyl farnesyl side group. The polypeptide is Protoheme IX farnesyltransferase (Pyrobaculum islandicum (strain DSM 4184 / JCM 9189 / GEO3)).